The chain runs to 117 residues: Immunoglobulin heavy variable 3-48 (117 aa).

The first 19 residues, 1 to 19, serve as a signal peptide directing secretion; it reads MELGLCWVFLVAILEGVQC. The framework-1 stretch occupies residues 20–44; it reads EVQLVESGGGLVQPGGSLRLSCAAS. Residues 20-117 enclose the Ig-like domain; it reads EVQLVESGGG…EDTAVYYCAR (98 aa). A disulfide bridge connects residues Cys41 and Cys115. Residues 45 to 52 form a complementarity-determining-1 region; sequence GFTFSSYE. Residues 53 to 69 are framework-2; the sequence is MNWVRQAPGKGLEWVSY. The segment at 70-77 is complementarity-determining-2; that stretch reads ISSSGSTI. A framework-3 region spans residues 78–115; that stretch reads YYADSVKGRFTISRDNAKNSLYLQMNSLRAEDTAVYYC. Residues 116 to 117 are complementarity-determining-3; sequence AR.

As to quaternary structure, immunoglobulins are composed of two identical heavy chains and two identical light chains; disulfide-linked. Post-translationally, the N-terminus is blocked.

The protein localises to the secreted. It is found in the cell membrane. V region of the variable domain of immunoglobulin heavy chains that participates in the antigen recognition. Immunoglobulins, also known as antibodies, are membrane-bound or secreted glycoproteins produced by B lymphocytes. In the recognition phase of humoral immunity, the membrane-bound immunoglobulins serve as receptors which, upon binding of a specific antigen, trigger the clonal expansion and differentiation of B lymphocytes into immunoglobulins-secreting plasma cells. Secreted immunoglobulins mediate the effector phase of humoral immunity, which results in the elimination of bound antigens. The antigen binding site is formed by the variable domain of one heavy chain, together with that of its associated light chain. Thus, each immunoglobulin has two antigen binding sites with remarkable affinity for a particular antigen. The variable domains are assembled by a process called V-(D)-J rearrangement and can then be subjected to somatic hypermutations which, after exposure to antigen and selection, allow affinity maturation for a particular antigen. The chain is Immunoglobulin heavy variable 3-48 from Homo sapiens (Human).